A 226-amino-acid polypeptide reads, in one-letter code: 3-dehydroquinate dehydratase (226 aa).

3-dehydroquinate contacts are provided by residues serine 21, 42-44, and arginine 70; that span reads EVR. The active-site Proton donor/acceptor is the histidine 124. Lysine 149 functions as the Schiff-base intermediate with substrate in the catalytic mechanism. 3-dehydroquinate contacts are provided by arginine 187, threonine 206, and glutamine 210.

Belongs to the type-I 3-dehydroquinase family. As to quaternary structure, homodimer.

It catalyses the reaction 3-dehydroquinate = 3-dehydroshikimate + H2O. Its pathway is metabolic intermediate biosynthesis; chorismate biosynthesis; chorismate from D-erythrose 4-phosphate and phosphoenolpyruvate: step 3/7. Its function is as follows. Involved in the third step of the chorismate pathway, which leads to the biosynthesis of aromatic amino acids. Catalyzes the cis-dehydration of 3-dehydroquinate (DHQ) and introduces the first double bond of the aromatic ring to yield 3-dehydroshikimate. The sequence is that of 3-dehydroquinate dehydratase from Methanothrix thermoacetophila (strain DSM 6194 / JCM 14653 / NBRC 101360 / PT) (Methanosaeta thermophila).